The sequence spans 309 residues: Probable manganese-dependent inorganic pyrophosphatase (309 aa).

Residues His9, Asp13, Asp15, Asp75, His97, and Asp149 each contribute to the Mn(2+) site.

Belongs to the PPase class C family. Mn(2+) serves as cofactor.

It is found in the cytoplasm. It carries out the reaction diphosphate + H2O = 2 phosphate + H(+). This chain is Probable manganese-dependent inorganic pyrophosphatase, found in Staphylococcus saprophyticus subsp. saprophyticus (strain ATCC 15305 / DSM 20229 / NCIMB 8711 / NCTC 7292 / S-41).